We begin with the raw amino-acid sequence, 330 residues long: DNA-directed RNA polymerase subunit alpha (330 aa).

The interval 1 to 229 is alpha N-terminal domain (alpha-NTD); sequence MKNLKFIKPF…DHFNVLVELS (229 aa). Residues 245–330 form an alpha C-terminal domain (alpha-CTD) region; the sequence is AHNYVLDLEI…HSVEEDKDKH (86 aa).

Belongs to the RNA polymerase alpha chain family. Homodimer. The RNAP catalytic core consists of 2 alpha, 1 beta, 1 beta' and 1 omega subunit. When a sigma factor is associated with the core the holoenzyme is formed, which can initiate transcription.

It catalyses the reaction RNA(n) + a ribonucleoside 5'-triphosphate = RNA(n+1) + diphosphate. Its function is as follows. DNA-dependent RNA polymerase catalyzes the transcription of DNA into RNA using the four ribonucleoside triphosphates as substrates. This is DNA-directed RNA polymerase subunit alpha from Aster yellows witches'-broom phytoplasma (strain AYWB).